A 441-amino-acid polypeptide reads, in one-letter code: Membrane-bound protease PH1510 (441 aa).

Positions 1–20 (MRRILLSMIVLIFLASPILA) are cleaved as a signal peptide. 64–67 (GGRA) lines the substrate pocket. S97 (nucleophile) is an active-site residue. 119 to 124 (ACRPIL) is a binding site for substrate. The active-site Proton donor/acceptor is K138. The next 4 helical transmembrane spans lie at 239–259 (VAYL…LTPG), 271–291 (IILA…ILLI), 307–327 (FGLF…LLFG), and 344–364 (ILII…MAAV).

Belongs to the peptidase S14 family. Homodimer.

The protein resides in the membrane. Inhibited by divalent metal cations, including Mg(2+), Mn(2+), Ca(2+) and Zn(2+). Mildly inhibited by 0.01 % SDS and 0.1% dodecyl-beta-D-maltoside. Activity is nearly abolished by 1 % SDS. Protease that cleaves its substrates preferentially near hydrophobic or aromatic amino acid residues. Can degrade casein and the stomatin homolog PH1511 (in vitro). The chain is Membrane-bound protease PH1510 from Pyrococcus horikoshii (strain ATCC 700860 / DSM 12428 / JCM 9974 / NBRC 100139 / OT-3).